The primary structure comprises 799 residues: Signal transducer and activator of transcription 5A (799 aa).

Tyrosine 90 bears the Phosphotyrosine mark. At serine 128 the chain carries Phosphoserine. Positions 589-686 constitute an SH2 domain; that stretch reads WNDGAILGFV…EVFSKYYTPV (98 aa). Tyrosine 682 carries the post-translational modification Phosphotyrosine. At tyrosine 699 the chain carries Phosphotyrosine; by JAK2. Residues 778–799 are disordered; it reads DSLDPRLSPPAGLFASTRGSLS. Phosphoserine is present on serine 785.

Belongs to the transcription factor STAT family. In terms of assembly, forms a homodimer or a heterodimer with a related family member. Binds NR3C1. Interacts with NCOA1 and SOCS7. Interacts with ERBB4. Interacts with EBF4. Interacts with CD69. ISGylated. In terms of processing, tyrosine phosphorylated in response to KITLG/SCF, IL2, IL3, IL7, IL15, CSF2/GMCSF, GH1, PRL, EPO and THPO. Activated KIT promotes phosphorylation on tyrosine residues and subsequent translocation to the nucleus. Tyrosine phosphorylated in response to constitutively activated FGFR1, FGFR2, FGFR3 and FGFR4. Tyrosine phosphorylation is required for DNA-binding activity and dimerization. Serine phosphorylation is also required for maximal transcriptional activity. Tyrosine phosphorylated in response to signaling via activated FLT3; wild-type FLT3 results in much weaker phosphorylation than constitutively activated mutant FLT3. Alternatively, can be phosphorylated by JAK2 at Tyr-699.

It localises to the cytoplasm. The protein localises to the nucleus. Its function is as follows. Carries out a dual function: signal transduction and activation of transcription. Mediates cellular responses to the cytokine KITLG/SCF and other growth factors. May mediate cellular responses to activated FGFR1, FGFR2, FGFR3 and FGFR4. Binds to the GAS element and activates PRL-induced transcription. Regulates the expression of milk proteins during lactation. This chain is Signal transducer and activator of transcription 5A (STAT5A), found in Sus scrofa (Pig).